Consider the following 194-residue polypeptide: dCTP deaminase (194 aa).

Residues 110–115 (RSSLAR), Asp-128, 136–138 (VLE), Tyr-171, Lys-178, and Gln-182 contribute to the dCTP site. Glu-138 functions as the Proton donor/acceptor in the catalytic mechanism.

It belongs to the dCTP deaminase family. Homotrimer.

The enzyme catalyses dCTP + H2O + H(+) = dUTP + NH4(+). It functions in the pathway pyrimidine metabolism; dUMP biosynthesis; dUMP from dCTP (dUTP route): step 1/2. Functionally, catalyzes the deamination of dCTP to dUTP. In Mannheimia succiniciproducens (strain KCTC 0769BP / MBEL55E), this protein is dCTP deaminase.